The sequence spans 2581 residues: Chromodomain-helicase-DNA-binding protein 8 (2581 aa).

Disordered regions lie at residues 22 to 114 (DDSF…QTST), 253 to 283 (VKGSAPAGNPGATGPPLKPAVTLTSTPTQGE), 349 to 392 (QKIQ…SPGQ), 429 to 582 (ALSS…QVKR), and 596 to 615 (DEEEEEVDVTGPIKPEPILP). Polar residues-rich tracts occupy residues 42–51 (SLDSLDQMNQ) and 94–114 (DYTTQPASQEQPAQPVLQTST). A compositionally biased stretch (low complexity) spans 255–267 (GSAPAGNPGATGP). Positions 355-370 (PQPPSSQPQPQQPPST) are enriched in pro residues. Ser432 carries the post-translational modification Phosphoserine. Composition is skewed to basic and acidic residues over residues 445-462 (GMEENRRLEHQKKQEKAN) and 493-516 (RPEEEGEKKRRKKSAGERLKEEKP). 2 positions are modified to phosphoserine: Ser553 and Ser562. A compositionally biased stretch (basic residues) spans 572 to 582 (QKRRSNRQVKR). A Glycyl lysine isopeptide (Lys-Gly) (interchain with G-Cter in SUMO) cross-link involves residue Lys609. Chromo domains follow at residues 642 to 709 (AIVD…AQMR) and 724 to 790 (VEVD…RVNR). In terms of domain architecture, Helicase ATP-binding spans 823-997 (LFNWYNRQNC…FSLLHFLEPS (175 aa)). 836-843 (DEMGLGKT) lines the ATP pocket. Positions 948–951 (DEAH) match the DEAH box motif. A Helicase C-terminal domain is found at 1137-1288 (LIDKLLPKLK…KAVLQSMSGR (152 aa)). A phosphoserine mark is found at Ser1420 and Ser1424. Residues 1692 to 1712 (EDPEYKPLQGPPKDQDDEGDP) are disordered. The interval 1789–2302 (IARREKQQRW…LVELEVECME (514 aa)) is interaction with FAM124B. Phosphoserine occurs at positions 1976 and 1978. Positions 1991-2116 (SRTASPLPLR…TDQSRSKLYD (126 aa)) are disordered. Residue Thr1993 is modified to Phosphothreonine. Ser1995 and Ser2008 each carry phosphoserine. Polar residues predominate over residues 2011-2021 (ETATQVPSLES). Residue Lys2025 forms a Glycyl lysine isopeptide (Lys-Gly) (interchain with G-Cter in SUMO2) linkage. Ser2046 is modified (phosphoserine). Thr2051 is subject to Phosphothreonine. The segment covering 2064-2073 (EDEDDSDSEL) has biased composition (acidic residues). Phosphoserine is present on residues Ser2069 and Ser2071. Low complexity predominate over residues 2076–2095 (SKLSPSSSSSSSSSSSSSST). Over residues 2103-2116 (EEKLTDQSRSKLYD) the composition is skewed to basic and acidic residues. Residues Ser2182, Ser2200, and Ser2202 each carry the phosphoserine modification. Positions 2189-2229 (GILGPGNHLLDSPSLTPGEYGDSPVPTPRSSSAASMAEEEA) are disordered. The residue at position 2204 (Thr2204) is a Phosphothreonine. Ser2211 is modified (phosphoserine). Position 2215 is a phosphothreonine (Thr2215). The segment covering 2218 to 2229 (SSSAASMAEEEA) has biased composition (low complexity). Ser2223 is subject to Phosphoserine. Residue Lys2256 forms a Glycyl lysine isopeptide (Lys-Gly) (interchain with G-Cter in SUMO2) linkage. Residues 2481–2581 (PSSPHVDSST…NSDSSEDADD (101 aa)) form a disordered region. A compositionally biased stretch (basic residues) spans 2492-2510 (LHHHHHHPHPHHHHHHHPG). A Phosphoserine modification is found at Ser2519. Residues 2519–2528 (SPVTTASGTT) show a composition bias toward polar residues. A compositionally biased stretch (acidic residues) spans 2536–2550 (PEEDDDEDEEDDDDL).

The protein belongs to the SNF2/RAD54 helicase family. CHD8 subfamily. As to quaternary structure, interacts with p53/TP53, histone H1, CTNNB1, CTCF and PIAS3. Component of some MLL1/MLL complex, at least composed of the core components KMT2A/MLL1, ASH2L, HCFC1/HCF1, WDR5 and RBBP5, as well as the facultative components BACC1, CHD8, E2F6, HSP70, INO80C, KANSL1, LAS1L, MAX, MCRS1, MGA, KAT8/MOF, PELP1, PHF20, PRP31, RING2, RUVB1/TIP49A, RUVB2/TIP49B, SENP3, TAF1, TAF4, TAF6, TAF7, TAF9 and TEX10. Interacts with CHD7. Interacts with FAM124B. Interacts with TLK2. Interacts with HNRNPL in an RNA-dependent manner. Sumoylated.

The protein resides in the nucleus. The catalysed reaction is ATP + H2O = ADP + phosphate + H(+). Its function is as follows. ATP-dependent chromatin-remodeling factor, it slides nucleosomes along DNA; nucleosome sliding requires ATP. Acts as a transcription repressor by remodeling chromatin structure and recruiting histone H1 to target genes. Suppresses p53/TP53-mediated apoptosis by recruiting histone H1 and preventing p53/TP53 transactivation activity. Acts as a negative regulator of Wnt signaling pathway by regulating beta-catenin (CTNNB1) activity. Negatively regulates CTNNB1-targeted gene expression by being recruited specifically to the promoter regions of several CTNNB1 responsive genes. Involved in both enhancer blocking and epigenetic remodeling at chromatin boundary via its interaction with CTCF. Acts as a suppressor of STAT3 activity by suppressing the LIF-induced STAT3 transcriptional activity. Also acts as a transcription activator via its interaction with ZNF143 by participating in efficient U6 RNA polymerase III transcription. Regulates alternative splicing of a core group of genes involved in neuronal differentiation, cell cycle and DNA repair. Enables H3K36me3-coupled transcription elongation and co-transcriptional RNA processing likely via interaction with HNRNPL. The polypeptide is Chromodomain-helicase-DNA-binding protein 8 (Homo sapiens (Human)).